We begin with the raw amino-acid sequence, 167 residues long: Crossover junction endodeoxyribonuclease RuvC (167 aa).

Active-site residues include Asp-11, Glu-71, and Asp-143. 3 residues coordinate Mg(2+): Asp-11, Glu-71, and Asp-143.

It belongs to the RuvC family. Homodimer which binds Holliday junction (HJ) DNA. The HJ becomes 2-fold symmetrical on binding to RuvC with unstacked arms; it has a different conformation from HJ DNA in complex with RuvA. In the full resolvosome a probable DNA-RuvA(4)-RuvB(12)-RuvC(2) complex forms which resolves the HJ. The cofactor is Mg(2+).

It localises to the cytoplasm. The enzyme catalyses Endonucleolytic cleavage at a junction such as a reciprocal single-stranded crossover between two homologous DNA duplexes (Holliday junction).. Its function is as follows. The RuvA-RuvB-RuvC complex processes Holliday junction (HJ) DNA during genetic recombination and DNA repair. Endonuclease that resolves HJ intermediates. Cleaves cruciform DNA by making single-stranded nicks across the HJ at symmetrical positions within the homologous arms, yielding a 5'-phosphate and a 3'-hydroxyl group; requires a central core of homology in the junction. The consensus cleavage sequence is 5'-(A/T)TT(C/G)-3'. Cleavage occurs on the 3'-side of the TT dinucleotide at the point of strand exchange. HJ branch migration catalyzed by RuvA-RuvB allows RuvC to scan DNA until it finds its consensus sequence, where it cleaves and resolves the cruciform DNA. This is Crossover junction endodeoxyribonuclease RuvC from Hyphomonas neptunium (strain ATCC 15444).